The primary structure comprises 548 residues: Frizzled-7-B (548 aa).

The N-terminal stretch at 1-18 (MLAPVSLLFCLFLQLCPS) is a signal peptide. Over 19-230 (AQQYHGEKGI…EEEVRFARLW (212 aa)) the chain is Extracellular. Positions 31 to 150 (PDHGFCQPIS…HGAGEICVGQ (120 aa)) constitute an FZ domain. 5 disulfides stabilise this stretch: C36-C97, C44-C90, C81-C118, C107-C147, and C111-C135. An N-linked (GlcNAc...) asparagine glycan is attached at N50. The N-linked (GlcNAc...) asparagine glycan is linked to N151. A helical transmembrane segment spans residues 231–251 (VGIWAILCGISTLFTVLTYLV). Over 252 to 262 (DMRRFSYPERP) the chain is Cytoplasmic. Residues 263-283 (IIFLSGCYFMVAVAYTAGFLL) form a helical membrane-spanning segment. At 284 to 311 (EERAVCVERFSEDSYRTVAQGTKKEGCT) the chain is on the extracellular side. A helical transmembrane segment spans residues 312–332 (ILFMILYFFGMASSIWWVILA). Over 333–353 (LTWFLSAGMKWGHEAIEANSQ) the chain is Cytoplasmic. Residues 354-374 (YFHLAAWAVPAVKTITILAMG) form a helical membrane-spanning segment. Residues 375–397 (QVDGDVLSGVCYVGINSVDSLRG) lie on the Extracellular side of the membrane. A helical membrane pass occupies residues 398–418 (FVLAPLFVYLFLGTSFLLAGF). Over 419–444 (VSLFRIRTIMKHDGTKTEKLEKLMVR) the chain is Cytoplasmic. A helical membrane pass occupies residues 445–465 (IGVFSVMYTVPATIVLACYFY). The Extracellular segment spans residues 466–502 (EQAFRDTWEKTWLVHTCKGYAVPCPNYNFAPMSPDFT). The chain crosses the membrane as a helical span at residues 503-523 (VFMIKYLMTMIVGITSSFWIW). Over 524 to 548 (SGKTLQSWRRFYHRLGNGSKGETAV) the chain is Cytoplasmic. The short motif at 526-531 (KTLQSW) is the Lys-Thr-X-X-X-Trp motif, mediates interaction with the PDZ domain of Dvl family members element. The PDZ-binding motif lies at 546–548 (TAV).

Belongs to the G-protein coupled receptor Fz/Smo family. Interacts with wnt11 and sdc4. The extracellular domain interacts with the extracellular domain of pcdh8/papc. Interacts (via C-terminus) with dvl1 (via PDZ domain). In terms of tissue distribution, during gastrulation, broadly expressed on the dorsal side of the embryo in deep mesodermal cells surrounding the blastopore lip and in presumptive anterior neuroectoderm. During neurulation, localized to the cranial neural crest and heart field where expression is retained at later stages in addition to new areas of expression in the neural tube, pronephros and tailbud. At tailbud stage, expressed in the pronephric duct, and broad head expression becomes more restricted to the hindbrain. In tadpoles, strongly expressed in the eye and the pericardium and myocardium of the developing heart.

It localises to the cell membrane. Its subcellular location is the endosome membrane. Functionally, receptor for Wnt proteins. Acts in both canonical and non-canonical Wnt pathways. Although different papers report differing Wnt preferences, wnt5a, wnt8b and wnt11 have been proposed as synergists. In the canonical Wnt pathway, acts via beta-catenin to promote the expression of the dorsal genes siamois, twin and nodal3 and to establish the dorsal axis of the embryo and induce dorsal mesoderm formation. In a non-canonical Wnt/planar cell polarity (PCP) pathway, acts with sdc4 and dvl2/dsh to regulate convergent extension cell movements during gastrulation. Triggers phosphorylation of dvl2/dsh and its translocation to the plasma membrane. In a third branch of Wnt signaling, acts in a non-canonical pathway via trimeric G proteins, and independently of dvl2/dsh, to recruit protein kinase C (PKC) to the membrane and thus activate PKC. PKC signaling controls cell sorting and tissue separation during gastrulation. The sequence is that of Frizzled-7-B (fzd7-b) from Xenopus laevis (African clawed frog).